The following is a 460-amino-acid chain: Putative RNA-guided DNA endonuclease MT2953 (460 aa).

Catalysis depends on residues Asp-224 and Glu-313. Positions 372, 375, 389, and 392 each coordinate Zn(2+). Asp-399 is an active-site residue. The disordered stretch occupies residues 415–460 (VVGPVGAAVKRGADRKTGPGPAGGREARKATGHPAGEQPRDGVQVK).

The protein in the N-terminal section; belongs to the transposase 2 family. This sequence in the C-terminal section; belongs to the transposase 35 family.

An RNA-guided dsDNA endonuclease. When guided by an RNA derived from the right-end element of its insertion sequence element (IS), cleaves DNA downstream of the transposon-associated motif (TAM). Cleaves supercoiled and linear DNA in a staggered manner 15-21 bases from the TAM yielding 5'-overhangs. Binds reRNA, an approximately 150 nucleotide base sRNA derived from the 3' end of its own gene, the right end (RE) of the insertion sequence (IS) plus sequence downstream of the IS. The chain is Putative RNA-guided DNA endonuclease MT2953 from Mycobacterium tuberculosis (strain CDC 1551 / Oshkosh).